Here is a 228-residue protein sequence, read N- to C-terminus: MSDISYREINANGFWHNNPGLVQLLGLCPLLAISGTVVNALGLGLATTLTLVASNVTVSLIRHWVRPEIRIPVFVLIIASVVTAIELAMNAFFHELYLILGIFIPLIVTNCAIIGRAEAFASKQPIPKALADGLAMGLGFTCVLVALGALREAVGHGTLLADAHLMFGEAARGFSLTLFEEYRGFLLALLPPGAFIALGLLIALKNIIDARLQKRQPAQAAVPVEAAG.

The next 5 membrane-spanning stretches (helical) occupy residues 24–44, 73–93, 95–115, 130–150, and 184–204; these read LLGLCPLLAISGTVVNALGLG, VFVLIIASVVTAIELAMNAFF, ELYLILGIFIPLIVTNCAIIG, LADGLAMGLGFTCVLVALGAL, and GFLLALLPPGAFIALGLLIAL.

The protein belongs to the NqrDE/RnfAE family. In terms of assembly, the complex is composed of six subunits: RnfA, RnfB, RnfC, RnfD, RnfE and RnfG.

Its subcellular location is the cell inner membrane. Part of a membrane-bound complex that couples electron transfer with translocation of ions across the membrane. This is Ion-translocating oxidoreductase complex subunit E from Thioalkalivibrio sulfidiphilus (strain HL-EbGR7).